Here is a 299-residue protein sequence, read N- to C-terminus: Secreted LysM effector ldpB (299 aa).

Positions 1–19 (MGLTSILIAQVLFLGAANS) are cleaved as a signal peptide. LysM domains follow at residues 46–91 (WVND…SYCV), 135–182 (AFYK…YVCI), and 211–258 (KYHK…YVCV). Residue N154 is glycosylated (N-linked (GlcNAc...) asparagine). Low complexity predominate over residues 266 to 283 (ATATPQPTPQPQQSSSPD). The tract at residues 266–288 (ATATPQPTPQPQQSSSPDQPMPQ) is disordered.

Belongs to the secreted LysM effector family.

The protein localises to the secreted. It is found in the cell wall. The protein resides in the extracellular space. Its subcellular location is the extracellular matrix. In terms of biological role, cell wall chitin of A.fumigatus recruits lung eosinophils during infection and ldpB might have a role in sequestration of chitin and act as triggers of host immunity to dampen host defense. This is Secreted LysM effector ldpB from Aspergillus fumigatus (strain ATCC MYA-4609 / CBS 101355 / FGSC A1100 / Af293) (Neosartorya fumigata).